The chain runs to 199 residues: 5'-deoxynucleotidase YfbR (199 aa).

Substrate is bound by residues 18 to 19 (RW) and histidine 33. Positions 30-142 (VSEHSLQVAM…VKQADALCAY (113 aa)) constitute an HD domain. Residues histidine 33, histidine 68, and aspartate 69 each coordinate a divalent metal cation. Substrate-binding positions include aspartate 69, 77-80 (DLPT), and aspartate 137. Aspartate 137 contributes to the a divalent metal cation binding site.

It belongs to the 5DNU family. As to quaternary structure, homodimer. A divalent metal cation is required as a cofactor.

The protein localises to the cytoplasm. The enzyme catalyses a 2'-deoxyribonucleoside 5'-phosphate + H2O = a 2'-deoxyribonucleoside + phosphate. In terms of biological role, catalyzes the strictly specific dephosphorylation of 2'-deoxyribonucleoside 5'-monophosphates. This Shigella flexneri serotype 5b (strain 8401) protein is 5'-deoxynucleotidase YfbR.